Reading from the N-terminus, the 380-residue chain is Cytochrome b (380 aa).

A run of 4 helical transmembrane segments spans residues 33 to 53 (FGSL…FLAM), 77 to 98 (WIIR…FLHV), 113 to 133 (WNIG…GYVL), and 178 to 198 (FFTL…LHLL). His83 and His97 together coordinate heme b. 2 residues coordinate heme b: His182 and His196. Position 201 (His201) interacts with a ubiquinone. Transmembrane regions (helical) follow at residues 226–246 (TKDI…TLFS), 288–308 (LGGV…PILH), 320–340 (LSQL…WIGG), and 347–367 (FITI…ILMP).

The protein belongs to the cytochrome b family. The cytochrome bc1 complex contains 11 subunits: 3 respiratory subunits (MT-CYB, CYC1 and UQCRFS1), 2 core proteins (UQCRC1 and UQCRC2) and 6 low-molecular weight proteins (UQCRH/QCR6, UQCRB/QCR7, UQCRQ/QCR8, UQCR10/QCR9, UQCR11/QCR10 and a cleavage product of UQCRFS1). This cytochrome bc1 complex then forms a dimer. The cofactor is heme b.

The protein localises to the mitochondrion inner membrane. Functionally, component of the ubiquinol-cytochrome c reductase complex (complex III or cytochrome b-c1 complex) that is part of the mitochondrial respiratory chain. The b-c1 complex mediates electron transfer from ubiquinol to cytochrome c. Contributes to the generation of a proton gradient across the mitochondrial membrane that is then used for ATP synthesis. This Pan paniscus (Pygmy chimpanzee) protein is Cytochrome b (MT-CYB).